The chain runs to 42 residues: F420-non-reducing hydrogenase vhu subunit U (42 aa).

Sec21 and Cys24 together coordinate Ni(2+). Residue Sec21 is a non-standard amino acid, selenocysteine. Residues 28–42 constitute a propeptide, removed in mature form; the sequence is VLDRVKFRIERKDED.

The protein belongs to the [NiFe]/[NiFeSe] hydrogenase large subunit family. As to quaternary structure, the F420-non-reducing hydrogenase vhu is composed of four subunits; VhuA, VhuD, VhuG and VhuU. Ni(2+) is required as a cofactor.

The polypeptide is F420-non-reducing hydrogenase vhu subunit U (vhuU) (Methanopyrus kandleri (strain AV19 / DSM 6324 / JCM 9639 / NBRC 100938)).